The sequence spans 88 residues: Small ribosomal subunit protein uS12 (88 aa).

Residues 1–24 (RKGRRDKIGKVKTAALKGSPQRRG) are disordered. D81 is modified (3-methylthioaspartic acid).

Belongs to the universal ribosomal protein uS12 family. As to quaternary structure, part of the 30S ribosomal subunit. Contacts proteins S8 and S17. May interact with IF1 in the 30S initiation complex.

With S4 and S5 plays an important role in translational accuracy. Its function is as follows. Interacts with and stabilizes bases of the 16S rRNA that are involved in tRNA selection in the A site and with the mRNA backbone. Located at the interface of the 30S and 50S subunits, it traverses the body of the 30S subunit contacting proteins on the other side and probably holding the rRNA structure together. The combined cluster of proteins S8, S12 and S17 appears to hold together the shoulder and platform of the 30S subunit. This is Small ribosomal subunit protein uS12 (rpsL) from Mycobacterium szulgai.